Consider the following 172-residue polypeptide: Acetolactate synthase small subunit (172 aa).

The ACT domain occupies 4–78 (TLSVLVEDEA…NILKVDNITE (75 aa)).

Belongs to the acetolactate synthase small subunit family. As to quaternary structure, dimer of large and small chains.

The protein resides in the plastid. It localises to the chloroplast. It catalyses the reaction 2 pyruvate + H(+) = (2S)-2-acetolactate + CO2. The protein operates within amino-acid biosynthesis; L-isoleucine biosynthesis; L-isoleucine from 2-oxobutanoate: step 1/4. Its pathway is amino-acid biosynthesis; L-valine biosynthesis; L-valine from pyruvate: step 1/4. In Cyanidium caldarium (Red alga), this protein is Acetolactate synthase small subunit (ilvH).